The sequence spans 94 residues: MLQSNEYFSGKVKSIGFSSSSTGRASVGVMVEGEYTFSTAEPEEMTVINGALNVLLPDATDWQVYEAGSVFNVPGHSEFHLQVAEPTSYLCRYL.

Belongs to the nucleoside phosphorylase PpnP family.

It carries out the reaction a purine D-ribonucleoside + phosphate = a purine nucleobase + alpha-D-ribose 1-phosphate. The enzyme catalyses adenosine + phosphate = alpha-D-ribose 1-phosphate + adenine. The catalysed reaction is cytidine + phosphate = cytosine + alpha-D-ribose 1-phosphate. It catalyses the reaction guanosine + phosphate = alpha-D-ribose 1-phosphate + guanine. It carries out the reaction inosine + phosphate = alpha-D-ribose 1-phosphate + hypoxanthine. The enzyme catalyses thymidine + phosphate = 2-deoxy-alpha-D-ribose 1-phosphate + thymine. The catalysed reaction is uridine + phosphate = alpha-D-ribose 1-phosphate + uracil. It catalyses the reaction xanthosine + phosphate = alpha-D-ribose 1-phosphate + xanthine. Its function is as follows. Catalyzes the phosphorolysis of diverse nucleosides, yielding D-ribose 1-phosphate and the respective free bases. Can use uridine, adenosine, guanosine, cytidine, thymidine, inosine and xanthosine as substrates. Also catalyzes the reverse reactions. This Shigella dysenteriae serotype 1 (strain Sd197) protein is Pyrimidine/purine nucleoside phosphorylase.